We begin with the raw amino-acid sequence, 508 residues long: Photosystem II CP47 reaction center protein (508 aa).

A run of 6 helical transmembrane segments spans residues 21-36 (AVHI…WAGS), 101-115 (IVFS…IWHW), 140-156 (GIHL…FGAF), 203-218 (IAAG…FHLS), 237-252 (VLSS…AFVV), and 457-472 (SFAL…HGSR).

This sequence belongs to the PsbB/PsbC family. PsbB subfamily. In terms of assembly, PSII is composed of 1 copy each of membrane proteins PsbA, PsbB, PsbC, PsbD, PsbE, PsbF, PsbH, PsbI, PsbJ, PsbK, PsbL, PsbM, PsbT, PsbX, PsbY, PsbZ, Psb30/Ycf12, at least 3 peripheral proteins of the oxygen-evolving complex and a large number of cofactors. It forms dimeric complexes. Requires Binds multiple chlorophylls. PSII binds additional chlorophylls, carotenoids and specific lipids. as cofactor.

The protein resides in the plastid. It localises to the chloroplast thylakoid membrane. One of the components of the core complex of photosystem II (PSII). It binds chlorophyll and helps catalyze the primary light-induced photochemical processes of PSII. PSII is a light-driven water:plastoquinone oxidoreductase, using light energy to abstract electrons from H(2)O, generating O(2) and a proton gradient subsequently used for ATP formation. The protein is Photosystem II CP47 reaction center protein of Lotus japonicus (Lotus corniculatus var. japonicus).